The sequence spans 465 residues: tRNA modification GTPase MnmE (465 aa).

R23, E81, and K120 together coordinate (6S)-5-formyl-5,6,7,8-tetrahydrofolate. One can recognise a TrmE-type G domain in the interval 217–389 (GVHVVLAGRP…LIASLCDKVG (173 aa)). A K(+)-binding site is contributed by N227. GTP contacts are provided by residues 227–232 (NAGKSS), 246–252 (TDVAGTT), and 271–274 (DTAG). A Mg(2+)-binding site is contributed by S231. The K(+) site is built by T246, V248, and T251. A Mg(2+)-binding site is contributed by T252. Residue K465 coordinates (6S)-5-formyl-5,6,7,8-tetrahydrofolate.

It belongs to the TRAFAC class TrmE-Era-EngA-EngB-Septin-like GTPase superfamily. TrmE GTPase family. As to quaternary structure, homodimer. Heterotetramer of two MnmE and two MnmG subunits. Requires K(+) as cofactor.

Its subcellular location is the cytoplasm. Its function is as follows. Exhibits a very high intrinsic GTPase hydrolysis rate. Involved in the addition of a carboxymethylaminomethyl (cmnm) group at the wobble position (U34) of certain tRNAs, forming tRNA-cmnm(5)s(2)U34. This chain is tRNA modification GTPase MnmE, found in Psychrobacter sp. (strain PRwf-1).